A 502-amino-acid polypeptide reads, in one-letter code: ATP synthase subunit alpha 1/3 (502 aa).

169 to 176 contributes to the ATP binding site; the sequence is GDRQTGKT.

The protein belongs to the ATPase alpha/beta chains family. As to quaternary structure, F-type ATPases have 2 components, CF(1) - the catalytic core - and CF(0) - the membrane proton channel. CF(1) has five subunits: alpha(3), beta(3), gamma(1), delta(1), epsilon(1). CF(0) has three main subunits: a(1), b(2) and c(9-12). The alpha and beta chains form an alternating ring which encloses part of the gamma chain. CF(1) is attached to CF(0) by a central stalk formed by the gamma and epsilon chains, while a peripheral stalk is formed by the delta and b chains.

The protein resides in the cell inner membrane. The enzyme catalyses ATP + H2O + 4 H(+)(in) = ADP + phosphate + 5 H(+)(out). Functionally, produces ATP from ADP in the presence of a proton gradient across the membrane. The alpha chain is a regulatory subunit. The sequence is that of ATP synthase subunit alpha 1/3 from Syntrophotalea carbinolica (strain DSM 2380 / NBRC 103641 / GraBd1) (Pelobacter carbinolicus).